The primary structure comprises 529 residues: MAEQNLLSEINKRRTFAIISHPDAGKTTITEKVLLFGQAIQKAGTVKGRGSNQHAKSDWMDMEKERGISVTTSVMQFPYKNALVNLLDTPGHEDFSEDTYRTLTAVDSCLMVIDAAKGVEDRTRKLMEVTRLRTTPIVTFMNKCDRDIRDPMELLDEVETELKIACAPITWPIGSGKGFKGVYHIHNDEAVLYKTGQGHKIQDVRTIKGIDNPELVDAIGDDLAAQLRDELELVIGASNEFDLELFLAGELSPVYFGTALGNFGVDHVLDGLTKWAPTPLPRETEDRQVVATEENFTGFVFKIQANMDPKHRDRIAFMRIVSGKYSQGMKMNHVRIGKQVSISDAVTFMAGDRERAGDAFAGDIIGLHNHGTIQIGDTFTQGEKLKFSGIPNFAPELFRRIRLRDPLKQKQLLKGLVQLSEEGAVQVFRPLINNDLIVGAVGVLQFDVVVARLKAEYNVDAIYEGVNVNTARWVSSDDVKKFEDFKRKCESNLALDGGDNLTYIAPSRVNLNLSVERYPEVTFSHTREN.

The tr-type G domain occupies 11–280 (NKRRTFAIIS…GLTKWAPTPL (270 aa)). GTP contacts are provided by residues 20–27 (SHPDAGKT), 88–92 (DTPGH), and 142–145 (NKCD).

Belongs to the TRAFAC class translation factor GTPase superfamily. Classic translation factor GTPase family. PrfC subfamily.

Its subcellular location is the cytoplasm. Its function is as follows. Increases the formation of ribosomal termination complexes and stimulates activities of RF-1 and RF-2. It binds guanine nucleotides and has strong preference for UGA stop codons. It may interact directly with the ribosome. The stimulation of RF-1 and RF-2 is significantly reduced by GTP and GDP, but not by GMP. This is Peptide chain release factor 3 from Pseudoalteromonas translucida (strain TAC 125).